The chain runs to 2353 residues: MAPYIGTQEGSPSSLGTFSHVQLSKDTNVASQYWEELFHSVGSQPRLACVPLDHQWPRAETTVLASDGLLEAATTFSRTHNISLADLIYAVWAIVSARQTVSGQSTALFTVTGRSYPSAKQDTPENGRAEQDYPLLLSVPEDVDVLSWVRSVSTAAATASALSYIGYDRIMERTSGIRPQVKVSVTFEVDSHDTMAPDDDFPLVFNIIASARLQLSMRHNATVPRGDVRALLDRFAATLQRVTANHDAKVSSVDIMPPAERQLLLDYGKAPLKPKSGMAHSLIEEQAKARPDAAAVQYETEPPLTFSALNTRANQLARQIRPYGTKYIAVHLRMSTDFIVALLAILKSGAAYVILDPDAPAARKSFILDDLQPGLVLVDISTAGELANEVQLGSLLSQASSHDTGDLLHVQDPSSVAYVIYTSGSTGKPKPTLLEHQAVFNGLLAFPPIEGLRQLLFFNPAFSAAQRSIWATLAVGGCLCLASKENLTVHTAKMINTMDINSVDMTSSAAALISPDDVPSLRRMVLGGEMVNPAVIQRWEHRVELLSSYGLSECTQLNWRHRLQSNVSSRLIGQPYDTTTSYILLPGTTELAPLLVPGELCLGGAQLARGYLHRPDETAKRFIPNPFGKGKLYRTGDMAVRHADGSVELIGRIDFQVKINGHRVDPGEPNSIIQAIEEVEDSAVVPASVNNRTVLVAAVVSRPDTEWEALVRKLRPFLAARLPLYMVPQFWVSMPALSVNANGKIDLVAIRRTVEALGESGQLLPERSSIGSREKRDLTDSEKVVRSLWAKVLSLSESEISLEDSFISLGGTSLEAIQVVSQLQVLHQLSLRVEDILLGETLFQVAAAVQPQPVEGKPDNDTISAALFEVAPSIESVGISISSIEDAFPVTPFQEAAIANTMMGGTSYIYSRSYSFEGYSPDDVRAAFETLMKSDGWLRTTYVPHGTSFLQVVKKTADLPWETSDMDVTEYLQKQTSKGMYPGELWWTAAALPNNVLVITAHHALFDFWSNEFLIQDLTSVLQGTPRIQRRGFRPYVEYLQQHDPVAMQEFWQGYLEGAVPSHLGSQIAPENTVAAEVHCDLKRTASQRRVTPGVLLYAAWAIVLGLANSTEDVVMGVTFSGRDVPLAGVLQMSGPTLMVAPLRVKVNKVTPLDKHLEDVQSNLWAVARNAPYGLRKILKASGQAKDLFDTMVNFLIKIPTSTPAGGLRQLPESNLGTVEYTRIELRNESLNRVTLTSTLEPRCAQALADTLAAILGAASDQPLTKLGEFRLVQPVPRLMERLDDPVGSVPVSAVHTIQAEDRVESPGGELAHSALQRMAASHPSRTAVEDISGARITYAGLAIKMNQLAGLLRERGLELEQIVPIMLEKSINTIVAMFGILVAGGAFLPLGPENPRERNLGILEDCGAKLVIADQLNADFFKGTSYEVIVIDAIAWDTIPLQRQVVPGLNPNSLAYVIYTSGSTGKPKGTLIPHSAIVAALDGILYATTQDNSRRIMWSLNYTFDGSFYPLFPTLATGRTLCVAPQNTIVGNLADVITKLRVDQINLTPTMASLLHPDDVPTLEILATGGEPVTHHMLNVWAPRIKVYTSYGPTEATICVTTRQVTPDMNIRNVGRPFPNTTALILDPDTMEELPSGSVGELCIAGPQLARGYLNRPEATNKAFQGTADQRFYRTGDLARLLPNGEIELFGRKDDQVKINGHRMELGEIESVIKQTNVFRQCAVIAATVLKKKQLVAFCSSSVQTPGEATGEDLLLAPTELPEVDQIKAQLTTLPQYMVPTIWLPVSKLPSLTSGKIDRKRLTALVEGMADNVLKSYLPHSETSEICSEAERELQSLWSALFDTPAEDIHANSTFHALGGDSISALNLGSMLRRRGYKIQINDILSRSTLREQAALMVQGQPNGDSTAAEAVPQPVFQPPEAVYERLVELGVSRNDVEDIYPCSPGQIEFFTQGEKPDRFWQLMAVRTLPDDLDFDRWIYLTTQLTKTNQILRALYLQTDAENPQTLVQVVLKHPVLNLAYRSYRTEEEKQSILEAEWQRPFDPAKPFVRYTLLEDSQGTRSLVINLHHSSYDGTLLHIFDDQFQALHQNQPIQQPTPFKDFITHFLRTPKQPQLDYWTRLLQNHSFDFPSAVIEPKLSSTEVAKIDASLGINGLASSTGVTAPIVFQTAYSLLLAHLSGARDVIYDNLVTGRNVALDNPQLINGNCANFLPYHSYVADDIPIETLLRSTQADFWTSTENGLVSLGEIYEALGRDRSTAAAKCLFCFQPFEPVTAQQDPMRWVVMKMSKNRMTFNYAIQMEVVKAAAKGEYLVRFGYDERAFSAEEARAALAWYTRCLDGMVKSKVVGELGV.

The segment at 305 to 684 (TFSALNTRAN…AIEEVEDSAV (380 aa)) is adenylation 1. The 78-residue stretch at 776-853 (RDLTDSEKVV…QVAAAVQPQP (78 aa)) folds into the Carrier 1 domain. S813 carries the post-translational modification O-(pantetheine 4'-phosphoryl)serine. A condensation 1 region spans residues 885–1147 (EDAFPVTPFQ…LMVAPLRVKV (263 aa)). An adenylation 2 region spans residues 1338 to 1725 (TYAGLAIKMN…QTNVFRQCAV (388 aa)). The region spanning 1826–1902 (EICSEAEREL…EQAALMVQGQ (77 aa)) is the Carrier 2 domain. S1863 carries the O-(pantetheine 4'-phosphoryl)serine modification. Positions 1939-2214 (EDIYPCSPGQ…NGNCANFLPY (276 aa)) are condensation 2.

The protein belongs to the NRP synthetase family.

In terms of biological role, nonribosomal peptide synthesis (NRPS) is a key mechanism responsible for the biosynthesis of bioactive metabolites which are potentially contributing to organismal virulence. In Aspergillus fumigatus (strain ATCC MYA-4609 / CBS 101355 / FGSC A1100 / Af293) (Neosartorya fumigata), this protein is Nonribosomal peptide synthetase 7 (NRPS7).